The primary structure comprises 242 residues: Ubiquinone/menaquinone biosynthesis C-methyltransferase UbiE (242 aa).

S-adenosyl-L-methionine contacts are provided by residues threonine 69, aspartate 87, and 114–115 (NA).

Belongs to the class I-like SAM-binding methyltransferase superfamily. MenG/UbiE family.

The catalysed reaction is a 2-demethylmenaquinol + S-adenosyl-L-methionine = a menaquinol + S-adenosyl-L-homocysteine + H(+). It carries out the reaction a 2-methoxy-6-(all-trans-polyprenyl)benzene-1,4-diol + S-adenosyl-L-methionine = a 5-methoxy-2-methyl-3-(all-trans-polyprenyl)benzene-1,4-diol + S-adenosyl-L-homocysteine + H(+). It functions in the pathway quinol/quinone metabolism; menaquinone biosynthesis; menaquinol from 1,4-dihydroxy-2-naphthoate: step 2/2. Its pathway is cofactor biosynthesis; ubiquinone biosynthesis. Methyltransferase required for the conversion of demethylmenaquinol (DMKH2) to menaquinol (MKH2) and the conversion of 2-polyprenyl-6-methoxy-1,4-benzoquinol (DDMQH2) to 2-polyprenyl-3-methyl-6-methoxy-1,4-benzoquinol (DMQH2). This is Ubiquinone/menaquinone biosynthesis C-methyltransferase UbiE from Zymomonas mobilis subsp. mobilis (strain ATCC 31821 / ZM4 / CP4).